We begin with the raw amino-acid sequence, 279 residues long: Glutamate racemase (279 aa).

Residues 13-14 (DS) and 45-46 (YG) contribute to the substrate site. C76 (proton donor/acceptor) is an active-site residue. Position 77–78 (77–78 (NT)) interacts with substrate. Residue C185 is the Proton donor/acceptor of the active site. 186–187 (TH) contacts substrate.

It belongs to the aspartate/glutamate racemases family.

It carries out the reaction L-glutamate = D-glutamate. It participates in cell wall biogenesis; peptidoglycan biosynthesis. Its function is as follows. Provides the (R)-glutamate required for cell wall biosynthesis. The protein is Glutamate racemase of Picosynechococcus sp. (strain ATCC 27264 / PCC 7002 / PR-6) (Agmenellum quadruplicatum).